A 371-amino-acid chain; its full sequence is Cathepsin L1 (371 aa).

The signal sequence occupies residues Met-1 to Ala-48. Positions Val-49–Thr-153 are cleaved as a propeptide — activation peptide. Asn-127 is a glycosylation site (N-linked (GlcNAc...) asparagine). 3 disulfides stabilise this stretch: Cys-175–Cys-218, Cys-209–Cys-251, and Cys-310–Cys-360. The active site involves Cys-178. The active site involves His-317. Positions Asp-327–Ser-329 are excised as a propeptide. Asn-338 is a catalytic residue.

This sequence belongs to the peptidase C1 family. Dimer of a heavy and a light chain linked by disulfide bonds. In the embryo, predominantly expressed in the midgut. Also expressed in larval alimentary organs such as salivary gland and midgut including gastric caeca.

The protein resides in the lysosome. It carries out the reaction Specificity close to that of papain. As compared to cathepsin B, cathepsin L exhibits higher activity toward protein substrates, but has little activity on Z-Arg-Arg-NHMec, and no peptidyl-dipeptidase activity.. In terms of biological role, important for the overall degradation of proteins in lysosomes. Essential for adult male and female fertility. May play a role in digestion. In Drosophila melanogaster (Fruit fly), this protein is Cathepsin L1.